The primary structure comprises 240 residues: UDP-2,3-diacylglucosamine hydrolase (240 aa).

Positions 8, 10, 41, 79, and 114 each coordinate Mn(2+). A substrate-binding site is contributed by 79–80 (NR). Substrate is bound by residues Asp-122, Ser-160, Asn-164, Lys-167, and His-195. Mn(2+) contacts are provided by His-195 and His-197.

The protein belongs to the LpxH family. Mn(2+) serves as cofactor.

The protein localises to the cell inner membrane. It carries out the reaction UDP-2-N,3-O-bis[(3R)-3-hydroxytetradecanoyl]-alpha-D-glucosamine + H2O = 2-N,3-O-bis[(3R)-3-hydroxytetradecanoyl]-alpha-D-glucosaminyl 1-phosphate + UMP + 2 H(+). The protein operates within glycolipid biosynthesis; lipid IV(A) biosynthesis; lipid IV(A) from (3R)-3-hydroxytetradecanoyl-[acyl-carrier-protein] and UDP-N-acetyl-alpha-D-glucosamine: step 4/6. In terms of biological role, hydrolyzes the pyrophosphate bond of UDP-2,3-diacylglucosamine to yield 2,3-diacylglucosamine 1-phosphate (lipid X) and UMP by catalyzing the attack of water at the alpha-P atom. Involved in the biosynthesis of lipid A, a phosphorylated glycolipid that anchors the lipopolysaccharide to the outer membrane of the cell. This is UDP-2,3-diacylglucosamine hydrolase from Escherichia coli O6:K15:H31 (strain 536 / UPEC).